Consider the following 144-residue polypeptide: Angiogenin-4 (144 aa).

Positions 1–24 (MTMSPCPLLLVFVLGLVVIPPTLA) are cleaved as a signal peptide. His36 serves as the catalytic Proton acceptor. 3 disulfide bridges follow: Cys49-Cys103, Cys62-Cys114, and Cys80-Cys129. The short motif at 54–58 (KERKL) is the Nucleolar localization signal element. The active-site Proton donor is His136.

This sequence belongs to the pancreatic ribonuclease family. Detected in small intestine, caecum and colon, with the highest expression in Paneth cells in the intestinal epithelium.

Its subcellular location is the secreted. It localises to the cytoplasmic vesicle. The protein localises to the secretory vesicle lumen. It is found in the nucleus. The protein resides in the nucleolus. In terms of biological role, has bactericidal activity against E.faecalis and L.monocytogenes, but not against L.innocua and E.coli. Promotes angiogenesis (in vitro). Has low ribonuclease activity (in vitro). Promotes proliferation of melanoma cells, but not of endothelial cells or fibroblasts (in vitro). This chain is Angiogenin-4 (Ang4), found in Mus musculus (Mouse).